The following is a 191-amino-acid chain: Protein Ves (191 aa).

This sequence belongs to the Ves family.

In Citrobacter koseri (strain ATCC BAA-895 / CDC 4225-83 / SGSC4696), this protein is Protein Ves.